A 663-amino-acid chain; its full sequence is Rap1 GTPase-activating protein 1 (663 aa).

Residues Met1–Phe17 enclose the GoLoco domain. The segment at Met1–Thr23 is disordered. Position 17 is a phosphoserine (Phe17). The region spanning Ile181–Leu397 is the Rap-GAP domain. Phosphoserine is present on Ser441. 2 disordered regions span residues Met442 to Arg604 and Ser616 to Pro645. Positions Lys450–Pro465 are enriched in polar residues. Phosphoserine occurs at positions 484, 499, 515, 541, and 542. The segment covering Glu535–Lys549 has biased composition (polar residues). Residues Arg567–Val579 are compositionally biased toward low complexity. The segment covering Glu580–Gly591 has biased composition (acidic residues). Residues Ser616–Arg630 are compositionally biased toward low complexity.

In terms of assembly, homodimer and heterodimer with RAP1B. Significant expression seen in the brain, kidney and pancreas. Abundant in the cerebral cortex and expressed at much lower levels in the spinal cord. Not detected in the lymphoid tissues.

The protein localises to the golgi apparatus membrane. Its function is as follows. GTPase activator for the nuclear Ras-related regulatory protein RAP-1A (KREV-1), converting it to the putatively inactive GDP-bound state. The sequence is that of Rap1 GTPase-activating protein 1 (RAP1GAP) from Homo sapiens (Human).